A 319-amino-acid chain; its full sequence is 8-methylmenaquinol:fumarate reductase iron-sulfur subunit (319 aa).

Residues Met-1–His-96 form the 2Fe-2S ferredoxin-type domain. 4 residues coordinate [2Fe-2S] cluster: Cys-51, Cys-56, Cys-59, and Cys-71. 4Fe-4S ferredoxin-type domains follow at residues Phe-139–Tyr-168 and Val-193–Ile-224. 8 residues coordinate [4Fe-4S] cluster: Cys-148, Cys-151, Cys-154, Cys-158, Cys-204, Cys-207, Cys-210, and Cys-214.

Belongs to the succinate dehydrogenase/fumarate reductase iron-sulfur protein family. The MFR complex is composed of three subunits: a flavoprotein (SdhA), an iron-sulfur protein (SdhB), and one hydrophobic anchor protein (SdhE). [2Fe-2S] cluster is required as a cofactor. Requires [4Fe-4S] cluster as cofactor.

The protein resides in the periplasm. The protein localises to the cell membrane. It catalyses the reaction 8-methylmenaquinone-6 + succinate = 8-methylmenaquinol-6 + fumarate. Its function is as follows. Iron-sulfur subunit of 8-methylmenaquinol:fumarate reductase (MFR), that catalyzes the reduction of fumarate using 8-methylmenaquinol-6 as electron donor. The complex shows no succinate oxidation activity. Is involved in anaerobic metabolism. This chain is 8-methylmenaquinol:fumarate reductase iron-sulfur subunit, found in Wolinella succinogenes (strain ATCC 29543 / DSM 1740 / CCUG 13145 / JCM 31913 / LMG 7466 / NCTC 11488 / FDC 602W) (Vibrio succinogenes).